Reading from the N-terminus, the 365-residue chain is tRNA(Met) cytidine acetate ligase (365 aa).

ATP contacts are provided by residues 7–20 (IAEF…HKYL), G96, N152, and R175.

The protein belongs to the TmcAL family.

It is found in the cytoplasm. It carries out the reaction cytidine(34) in elongator tRNA(Met) + acetate + ATP = N(4)-acetylcytidine(34) in elongator tRNA(Met) + AMP + diphosphate. Its function is as follows. Catalyzes the formation of N(4)-acetylcytidine (ac(4)C) at the wobble position of elongator tRNA(Met), using acetate and ATP as substrates. First activates an acetate ion to form acetyladenylate (Ac-AMP) and then transfers the acetyl group to tRNA to form ac(4)C34. This is tRNA(Met) cytidine acetate ligase from Streptococcus pneumoniae serotype 4 (strain ATCC BAA-334 / TIGR4).